We begin with the raw amino-acid sequence, 284 residues long: UPF0761 membrane protein IL2447 (284 aa).

6 helical membrane passes run 41–61, 98–118, 137–157, 178–198, 214–234, and 247–267; these read MLSLVPLLVVMFTVFSAFPMF, MTAIGVGFLFIVAIMLMSAID, FAVYWMLLTLGPVLIGSGLAA, FVLWFVPIVTSFVFFVLMYQL, VIAALLFELSKQLFSLYITFF, and IPILIVWIYLSWLIVLIGAVL.

This sequence belongs to the UPF0761 family.

Its subcellular location is the cell inner membrane. The polypeptide is UPF0761 membrane protein IL2447 (Idiomarina loihiensis (strain ATCC BAA-735 / DSM 15497 / L2-TR)).